We begin with the raw amino-acid sequence, 314 residues long: uncharacterized protein (314 aa).

The first 24 residues, 1–24 (MKRRRRWRGWLLFPALCFCLLCEA), serve as a signal peptide directing secretion. Residues Asn28, Asn43, Asn57, Asn77, Asn101, Asn102, Asn109, Asn151, Asn170, Asn217, Asn223, Asn252, Asn255, and Asn268 are each glycosylated (N-linked (GlcNAc...) asparagine; by host). The segment covering 47–114 (ATTGTTTTSP…TIGTNATSPS (68 aa)) has biased composition (low complexity). Residues 47–116 (ATTGTTTTSP…GTNATSPSPS (70 aa)) form a disordered region.

It belongs to the HHV-5 UL116 protein family. As to quaternary structure, interacts with gH. Interacts with UL148. Post-translationally, highly glycosylated.

The protein localises to the virion. The protein resides in the host endoplasmic reticulum. In terms of biological role, chaperone protein that cooperates with UL148 to regulate the abundance of gH complexes in virion. First interactor of gH in the host endoplasmic reticulum, regulates the early folding steps of virion assembly. Then, UL148 is recruited and favors the binding of gL. This is an uncharacterized protein from Homo sapiens (Human).